A 537-amino-acid chain; its full sequence is Copine-3 (537 aa).

C2 domains lie at 1–115 and 124–247; these read MAAQ…TRPL and GKGS…PVEF. Residue serine 14 is modified to Phosphoserine. The Ca(2+) site is built by aspartate 22, aspartate 28, aspartate 81, aspartate 83, aspartate 93, aspartate 154, and aspartate 160. Serine 197 is modified (phosphoserine). Ca(2+) contacts are provided by aspartate 216, aspartate 218, and aspartate 224. Phosphoserine is present on serine 243. In terms of domain architecture, VWFA spans 291-513; it reads NFTVGVDFTG…AQCVLAEIPQ (223 aa).

It belongs to the copine family. As to quaternary structure, monomer. Interacts with ERBB2 (preferentially with the tyrosine phosphorylated form); this interaction occurs at the cell membrane and is increased in a growth factor heregulin-dependent manner. Interacts with SHC1; this interaction may mediate the binding of CPNE3 with ERBB2. Interacts with RACK1. Requires Ca(2+) as cofactor. In terms of processing, phosphorylated on serine and threonine residues. As to expression, expressed in breast and weakly in prostate and ovarian tissues. Expressed in neutrophils (at protein level). Widely expressed. Expressed in the brain. Expressed in neutrophil precursors from the bone marrow and peripheral blood. Expressed in primary breast tumors and ovarian endometrioid adenocarcinoma.

It localises to the nucleus. Its subcellular location is the cytoplasm. It is found in the cell membrane. The protein localises to the cell junction. The protein resides in the focal adhesion. Calcium-dependent phospholipid-binding protein that plays a role in ERBB2-mediated tumor cell migration in response to growth factor heregulin stimulation. This Homo sapiens (Human) protein is Copine-3.